The primary structure comprises 529 residues: Putative inorganic phosphate cotransporter (529 aa).

8 helical membrane passes run phenylalanine 37–methionine 57, tyrosine 110–alanine 130, valine 148–valine 168, alanine 202–alanine 222, serine 232–valine 252, leucine 338–isoleucine 358, phenylalanine 429–alanine 449, and isoleucine 466–glycine 486. Residues asparagine 495–serine 529 form a disordered region. Residues alanine 504–serine 529 show a composition bias toward polar residues.

Belongs to the major facilitator superfamily. Sodium/anion cotransporter family.

The protein resides in the membrane. Its function is as follows. May be an inorganic phosphate cotransporter. The chain is Putative inorganic phosphate cotransporter (Picot) from Drosophila melanogaster (Fruit fly).